The following is a 254-amino-acid chain: Triosephosphate isomerase (254 aa).

9-11 serves as a coordination point for substrate; it reads NWK. Histidine 95 functions as the Electrophile in the catalytic mechanism. Glutamate 167 serves as the catalytic Proton acceptor. Residues glycine 173, serine 213, and 234 to 235 each bind substrate; that span reads GG.

The protein belongs to the triosephosphate isomerase family. Homodimer.

It is found in the cytoplasm. It carries out the reaction D-glyceraldehyde 3-phosphate = dihydroxyacetone phosphate. It participates in carbohydrate biosynthesis; gluconeogenesis. It functions in the pathway carbohydrate degradation; glycolysis; D-glyceraldehyde 3-phosphate from glycerone phosphate: step 1/1. In terms of biological role, involved in the gluconeogenesis. Catalyzes stereospecifically the conversion of dihydroxyacetone phosphate (DHAP) to D-glyceraldehyde-3-phosphate (G3P). The chain is Triosephosphate isomerase from Roseiflexus castenholzii (strain DSM 13941 / HLO8).